Here is a 106-residue protein sequence, read N- to C-terminus: Large ribosomal subunit protein bL21 (106 aa).

This sequence belongs to the bacterial ribosomal protein bL21 family. In terms of assembly, part of the 50S ribosomal subunit. Contacts protein L20.

This protein binds to 23S rRNA in the presence of protein L20. This Chlamydia caviae (strain ATCC VR-813 / DSM 19441 / 03DC25 / GPIC) (Chlamydophila caviae) protein is Large ribosomal subunit protein bL21.